We begin with the raw amino-acid sequence, 490 residues long: UDP-glycosyltransferase 86A1 (490 aa).

UDP-alpha-D-glucose contacts are provided by residues Ser294, Cys352–Gln354, His369–Glu377, and Leu391–Gln394.

This sequence belongs to the UDP-glycosyltransferase family.

The chain is UDP-glycosyltransferase 86A1 (UGT86A1) from Arabidopsis thaliana (Mouse-ear cress).